A 310-amino-acid chain; its full sequence is Prephenate dehydratase (310 aa).

One can recognise a Prephenate dehydratase domain in the interval 3–190 (RIAYLGPEGT…ARTRFVLVGL (188 aa)). The 78-residue stretch at 204-281 (AVVLRLVNEP…VDVRYLGSWP (78 aa)) folds into the ACT domain.

Homodimer.

It carries out the reaction prephenate + H(+) = 3-phenylpyruvate + CO2 + H2O. The protein operates within amino-acid biosynthesis; L-phenylalanine biosynthesis; phenylpyruvate from prephenate: step 1/1. This chain is Prephenate dehydratase (pheA), found in Mycolicibacterium smegmatis (strain ATCC 700084 / mc(2)155) (Mycobacterium smegmatis).